The sequence spans 142 residues: Cytidine deaminase (142 aa).

Residues 9–139 form the CMP/dCMP-type deaminase domain; it reads RQLEALKRAA…ELLPMAFGPS (131 aa). 50-52 serves as a coordination point for substrate; that stretch reads NVE. Cysteine 61 contributes to the Zn(2+) binding site. The Proton donor role is filled by glutamate 63. Cysteine 96 and cysteine 99 together coordinate Zn(2+).

The protein belongs to the cytidine and deoxycytidylate deaminase family. Homodimer. Requires Zn(2+) as cofactor.

It catalyses the reaction cytidine + H2O + H(+) = uridine + NH4(+). The catalysed reaction is 2'-deoxycytidine + H2O + H(+) = 2'-deoxyuridine + NH4(+). In terms of biological role, this enzyme scavenges exogenous and endogenous cytidine and 2'-deoxycytidine for UMP synthesis. This is Cytidine deaminase (CDD1) from Saccharomyces cerevisiae (strain ATCC 204508 / S288c) (Baker's yeast).